Reading from the N-terminus, the 99-residue chain is MPVEYYLWLASILFGIGLLGVLTKRNALILMMSVELMLNAANLTFLAFARRSGDVAGHAIAFFVIAVAAAEAAVGLAVVIAIYRSRGAINVDEVRVLSE.

3 consecutive transmembrane segments (helical) span residues 2–22 (PVEY…LGVL), 28–48 (LILM…FLAF), and 60–80 (IAFF…AVVI).

It belongs to the complex I subunit 4L family. As to quaternary structure, NDH-1 is composed of 14 different subunits. Subunits NuoA, H, J, K, L, M, N constitute the membrane sector of the complex.

It localises to the cell inner membrane. It carries out the reaction a quinone + NADH + 5 H(+)(in) = a quinol + NAD(+) + 4 H(+)(out). NDH-1 shuttles electrons from NADH, via FMN and iron-sulfur (Fe-S) centers, to quinones in the respiratory chain. The immediate electron acceptor for the enzyme in this species is believed to be ubiquinone. Couples the redox reaction to proton translocation (for every two electrons transferred, four hydrogen ions are translocated across the cytoplasmic membrane), and thus conserves the redox energy in a proton gradient. This is NADH-quinone oxidoreductase subunit K from Anaeromyxobacter dehalogenans (strain 2CP-C).